Reading from the N-terminus, the 134-residue chain is Transcription antitermination protein NusB (134 aa).

It belongs to the NusB family.

Its function is as follows. Involved in transcription antitermination. Required for transcription of ribosomal RNA (rRNA) genes. Binds specifically to the boxA antiterminator sequence of the ribosomal RNA (rrn) operons. This chain is Transcription antitermination protein NusB, found in Shewanella sp. (strain W3-18-1).